A 562-amino-acid polypeptide reads, in one-letter code: Arginine--tRNA ligase (562 aa).

The 'HIGH' region motif lies at 129 to 139 (ANPTGPLHVGH).

This sequence belongs to the class-I aminoacyl-tRNA synthetase family. As to quaternary structure, monomer.

Its subcellular location is the cytoplasm. It carries out the reaction tRNA(Arg) + L-arginine + ATP = L-arginyl-tRNA(Arg) + AMP + diphosphate. The chain is Arginine--tRNA ligase (argS) from Xylella fastidiosa (strain 9a5c).